A 1381-amino-acid chain; its full sequence is DNA-directed RNA polymerase subunit beta' (1381 aa).

Residues Cys-70, Cys-72, Cys-85, and Cys-88 each coordinate Zn(2+). Asp-461, Asp-463, and Asp-465 together coordinate Mg(2+). Cys-801, Cys-875, Cys-882, and Cys-885 together coordinate Zn(2+). The segment at 1362 to 1381 (VEIEGDENSNKKSLDMHAAN) is disordered. A compositionally biased stretch (basic and acidic residues) spans 1369–1381 (NSNKKSLDMHAAN).

The protein belongs to the RNA polymerase beta' chain family. In terms of assembly, the RNAP catalytic core consists of 2 alpha, 1 beta, 1 beta' and 1 omega subunit. When a sigma factor is associated with the core the holoenzyme is formed, which can initiate transcription. It depends on Mg(2+) as a cofactor. Zn(2+) serves as cofactor.

The catalysed reaction is RNA(n) + a ribonucleoside 5'-triphosphate = RNA(n+1) + diphosphate. In terms of biological role, DNA-dependent RNA polymerase catalyzes the transcription of DNA into RNA using the four ribonucleoside triphosphates as substrates. The protein is DNA-directed RNA polymerase subunit beta' of Syntrophus aciditrophicus (strain SB).